The primary structure comprises 380 residues: Omega-3 fatty acid desaturase, endoplasmic reticulum (380 aa).

The chain crosses the membrane as a helical span at residues 59-78 (VLVVTALAASAISFNSWFFW). The Histidine box-1 motif lies at 97–101 (HDCGH). The Histidine box-2 motif lies at 133-137 (HRTHH). 2 helical membrane-spanning segments follow: residues 208–231 (GVVTSTLCWGIVLSVLLYLSLTIG) and 238–256 (LYGVPYLIFVMWLDFVTYL). The Histidine box-3 signature appears at 300-304 (HVIHH).

Belongs to the fatty acid desaturase type 1 family.

Its subcellular location is the endoplasmic reticulum membrane. Its pathway is lipid metabolism; polyunsaturated fatty acid biosynthesis. Microsomal (ER) omega-3 fatty acid desaturase introduces the third double bond in the biosynthesis of 18:3 fatty acids, important constituents of plant membranes. It is thought to use cytochrome b5 as an electron donor and to act on fatty acids esterified to phosphatidylcholine and, possibly, other phospholipids. In Vigna radiata var. radiata (Mung bean), this protein is Omega-3 fatty acid desaturase, endoplasmic reticulum (ARG1).